Here is a 168-residue protein sequence, read N- to C-terminus: Phosphopantetheine adenylyltransferase (168 aa).

Residue Thr-14 coordinates substrate. ATP contacts are provided by residues 14 to 15 (TF) and His-22. Residues Lys-46, Leu-78, and Arg-92 each contribute to the substrate site. ATP-binding positions include 93–95 (GLR), Glu-103, and 128–134 (YSFISSS).

Belongs to the bacterial CoaD family. Homohexamer. Mg(2+) serves as cofactor.

It is found in the cytoplasm. The enzyme catalyses (R)-4'-phosphopantetheine + ATP + H(+) = 3'-dephospho-CoA + diphosphate. The protein operates within cofactor biosynthesis; coenzyme A biosynthesis; CoA from (R)-pantothenate: step 4/5. Reversibly transfers an adenylyl group from ATP to 4'-phosphopantetheine, yielding dephospho-CoA (dPCoA) and pyrophosphate. The protein is Phosphopantetheine adenylyltransferase of Xanthomonas euvesicatoria pv. vesicatoria (strain 85-10) (Xanthomonas campestris pv. vesicatoria).